The chain runs to 277 residues: Bis(5'-nucleosyl)-tetraphosphatase, symmetrical (277 aa).

Belongs to the Ap4A hydrolase family.

It carries out the reaction P(1),P(4)-bis(5'-adenosyl) tetraphosphate + H2O = 2 ADP + 2 H(+). Its function is as follows. Hydrolyzes diadenosine 5',5'''-P1,P4-tetraphosphate to yield ADP. This chain is Bis(5'-nucleosyl)-tetraphosphatase, symmetrical, found in Azotobacter vinelandii (strain DJ / ATCC BAA-1303).